The following is a 704-amino-acid chain: Polyribonucleotide nucleotidyltransferase (704 aa).

Aspartate 488 and aspartate 494 together coordinate Mg(2+). The KH domain maps to 555–614 (PRITTIKINPEKIRDVIGKGGATIRALTEETGTTIELDDDGTVKIASSNGEATKEAIRRI). Residues 624-692 (GTVYNGKVVR…RQGRVRLSMK (69 aa)) form the S1 motif domain.

The protein belongs to the polyribonucleotide nucleotidyltransferase family. As to quaternary structure, component of the RNA degradosome, which is a multiprotein complex involved in RNA processing and mRNA degradation. Requires Mg(2+) as cofactor.

The protein resides in the cytoplasm. It carries out the reaction RNA(n+1) + phosphate = RNA(n) + a ribonucleoside 5'-diphosphate. Its function is as follows. Involved in mRNA degradation. Catalyzes the phosphorolysis of single-stranded polyribonucleotides processively in the 3'- to 5'-direction. In Shewanella pealeana (strain ATCC 700345 / ANG-SQ1), this protein is Polyribonucleotide nucleotidyltransferase.